A 239-amino-acid chain; its full sequence is Ribonuclease HII (239 aa).

In terms of domain architecture, RNase H type-2 spans 30–221 (GPVAGVDEVG…VRRLVTAGTP (192 aa)). D36, E37, and D130 together coordinate a divalent metal cation.

This sequence belongs to the RNase HII family. It depends on Mn(2+) as a cofactor. The cofactor is Mg(2+).

It is found in the cytoplasm. It carries out the reaction Endonucleolytic cleavage to 5'-phosphomonoester.. Its function is as follows. Endonuclease that specifically degrades the RNA of RNA-DNA hybrids. This chain is Ribonuclease HII, found in Mycobacterium sp. (strain JLS).